Reading from the N-terminus, the 400-residue chain is Probable peptidoglycan D,D-transpeptidase PenA (400 aa).

Residues 1 to 21 (NIDGKGQEGLELSREDSLRGE) form a disordered region. S128 (acyl-ester intermediate) is an active-site residue.

The protein belongs to the transpeptidase family. FtsI subfamily.

Its subcellular location is the cell inner membrane. The enzyme catalyses Preferential cleavage: (Ac)2-L-Lys-D-Ala-|-D-Ala. Also transpeptidation of peptidyl-alanyl moieties that are N-acyl substituents of D-alanine.. It functions in the pathway cell wall biogenesis; peptidoglycan biosynthesis. Its function is as follows. Catalyzes cross-linking of the peptidoglycan cell wall at the division septum. The sequence is that of Probable peptidoglycan D,D-transpeptidase PenA from Neisseria flavescens.